A 121-amino-acid chain; its full sequence is Small ribosomal subunit protein bS6 (121 aa).

This sequence belongs to the bacterial ribosomal protein bS6 family.

Its function is as follows. Binds together with bS18 to 16S ribosomal RNA. The sequence is that of Small ribosomal subunit protein bS6 from Rickettsia canadensis (strain McKiel).